A 262-amino-acid polypeptide reads, in one-letter code: Small ribosomal subunit protein uS2 (262 aa).

Belongs to the universal ribosomal protein uS2 family.

The sequence is that of Small ribosomal subunit protein uS2 from Borrelia garinii subsp. bavariensis (strain ATCC BAA-2496 / DSM 23469 / PBi) (Borreliella bavariensis).